A 151-amino-acid polypeptide reads, in one-letter code: Large ribosomal subunit protein bL9 (151 aa).

The protein belongs to the bacterial ribosomal protein bL9 family.

In terms of biological role, binds to the 23S rRNA. The sequence is that of Large ribosomal subunit protein bL9 from Prochlorococcus marinus (strain MIT 9301).